The chain runs to 190 residues: MKCIVGLGNIGKRFELTRHNIGFEVIDYILKKHNFSLDKQKFKGAYTIERLNGDKVLFIEPMTMMNLSGEAVGPLMDYYNVEVEDLIVLYDDLDLSQGQIRLRQKGSAGGHNGMKSIIKHLGTDQFKRIRIGVGRPTNGMSVPDYVLQKFSKEEMITMDKVIEHSAHAVEAFIESSRFDHVMNQYNGEVN.

Residue F14 participates in tRNA binding. The Proton acceptor role is filled by H19. TRNA is bound by residues M64, N66, and N112.

This sequence belongs to the PTH family. In terms of assembly, monomer.

It localises to the cytoplasm. The enzyme catalyses an N-acyl-L-alpha-aminoacyl-tRNA + H2O = an N-acyl-L-amino acid + a tRNA + H(+). Functionally, hydrolyzes ribosome-free peptidyl-tRNAs (with 1 or more amino acids incorporated), which drop off the ribosome during protein synthesis, or as a result of ribosome stalling. Its function is as follows. Catalyzes the release of premature peptidyl moieties from peptidyl-tRNA molecules trapped in stalled 50S ribosomal subunits, and thus maintains levels of free tRNAs and 50S ribosomes. In Staphylococcus haemolyticus (strain JCSC1435), this protein is Peptidyl-tRNA hydrolase.